A 212-amino-acid chain; its full sequence is 3-isopropylmalate dehydratase small subunit (212 aa).

It belongs to the LeuD family. LeuD type 1 subfamily. Heterodimer of LeuC and LeuD.

The enzyme catalyses (2R,3S)-3-isopropylmalate = (2S)-2-isopropylmalate. The protein operates within amino-acid biosynthesis; L-leucine biosynthesis; L-leucine from 3-methyl-2-oxobutanoate: step 2/4. Its function is as follows. Catalyzes the isomerization between 2-isopropylmalate and 3-isopropylmalate, via the formation of 2-isopropylmaleate. This Methylococcus capsulatus (strain ATCC 33009 / NCIMB 11132 / Bath) protein is 3-isopropylmalate dehydratase small subunit.